Here is a 1178-residue protein sequence, read N- to C-terminus: DNA-directed RNA polymerase subunit beta (1178 aa).

The interval 1-37 (MLEGCILPDFGQSKTDVSPSQSRPQSSPNNSVPGAPN) is disordered. Over residues 17-33 (VSPSQSRPQSSPNNSVP) the composition is skewed to low complexity.

The protein belongs to the RNA polymerase beta chain family. The RNAP catalytic core consists of 2 alpha, 1 beta, 1 beta' and 1 omega subunit. When a sigma factor is associated with the core the holoenzyme is formed, which can initiate transcription.

The enzyme catalyses RNA(n) + a ribonucleoside 5'-triphosphate = RNA(n+1) + diphosphate. In terms of biological role, DNA-dependent RNA polymerase catalyzes the transcription of DNA into RNA using the four ribonucleoside triphosphates as substrates. The sequence is that of DNA-directed RNA polymerase subunit beta from Mycobacterium leprae (strain Br4923).